The sequence spans 498 residues: ATP synthase subunit beta, chloroplastic (498 aa).

172 to 179 (GGAGVGKT) contacts ATP.

It belongs to the ATPase alpha/beta chains family. In terms of assembly, F-type ATPases have 2 components, CF(1) - the catalytic core - and CF(0) - the membrane proton channel. CF(1) has five subunits: alpha(3), beta(3), gamma(1), delta(1), epsilon(1). CF(0) has four main subunits: a(1), b(1), b'(1) and c(9-12).

Its subcellular location is the plastid. The protein localises to the chloroplast thylakoid membrane. The enzyme catalyses ATP + H2O + 4 H(+)(in) = ADP + phosphate + 5 H(+)(out). Produces ATP from ADP in the presence of a proton gradient across the membrane. The catalytic sites are hosted primarily by the beta subunits. The protein is ATP synthase subunit beta, chloroplastic of Zea mays (Maize).